The primary structure comprises 345 residues: Uroporphyrinogen decarboxylase (345 aa).

Substrate contacts are provided by residues 30–34, D79, Y154, S209, and H322; that span reads RQAGR.

This sequence belongs to the uroporphyrinogen decarboxylase family. Homodimer.

It is found in the cytoplasm. The enzyme catalyses uroporphyrinogen III + 4 H(+) = coproporphyrinogen III + 4 CO2. It participates in porphyrin-containing compound metabolism; protoporphyrin-IX biosynthesis; coproporphyrinogen-III from 5-aminolevulinate: step 4/4. Its function is as follows. Catalyzes the decarboxylation of four acetate groups of uroporphyrinogen-III to yield coproporphyrinogen-III. This chain is Uroporphyrinogen decarboxylase, found in Nocardioides sp. (strain ATCC BAA-499 / JS614).